The sequence spans 454 residues: Guanine deaminase (454 aa).

Zn(2+) contacts are provided by histidine 82 and histidine 84. Substrate is bound by residues histidine 84 to glutamine 87, arginine 213 to phenylalanine 214, histidine 240 to glutamate 243, and aspartate 330. Zn(2+) contacts are provided by histidine 240 and aspartate 330. At serine 453 the chain carries Phosphoserine.

Belongs to the metallo-dependent hydrolases superfamily. ATZ/TRZ family. Homodimer. Zn(2+) serves as cofactor.

It catalyses the reaction guanine + H2O + H(+) = xanthine + NH4(+). It functions in the pathway purine metabolism; guanine degradation; xanthine from guanine: step 1/1. Catalyzes the hydrolytic deamination of guanine, producing xanthine and ammonia. This is Guanine deaminase (Gda) from Rattus norvegicus (Rat).